Here is a 261-residue protein sequence, read N- to C-terminus: Hydroxyethylthiazole kinase (261 aa).

Substrate is bound at residue M38. Positions 114 and 159 each coordinate ATP. G186 serves as a coordination point for substrate.

Belongs to the Thz kinase family. The cofactor is Mg(2+).

The catalysed reaction is 5-(2-hydroxyethyl)-4-methylthiazole + ATP = 4-methyl-5-(2-phosphooxyethyl)-thiazole + ADP + H(+). The protein operates within cofactor biosynthesis; thiamine diphosphate biosynthesis; 4-methyl-5-(2-phosphoethyl)-thiazole from 5-(2-hydroxyethyl)-4-methylthiazole: step 1/1. Catalyzes the phosphorylation of the hydroxyl group of 4-methyl-5-beta-hydroxyethylthiazole (THZ). This Halalkalibacterium halodurans (strain ATCC BAA-125 / DSM 18197 / FERM 7344 / JCM 9153 / C-125) (Bacillus halodurans) protein is Hydroxyethylthiazole kinase.